Reading from the N-terminus, the 270-residue chain is Diaminopimelate epimerase (270 aa).

Substrate is bound by residues asparagine 15, glutamine 49, and asparagine 66. The active-site Proton donor is cysteine 75. Residues 76–77 (GN), asparagine 155, asparagine 187, and 204–205 (ER) each bind substrate. Residue cysteine 213 is the Proton acceptor of the active site. 214 to 215 (GS) lines the substrate pocket.

The protein belongs to the diaminopimelate epimerase family. Homodimer.

It localises to the cytoplasm. It carries out the reaction (2S,6S)-2,6-diaminopimelate = meso-2,6-diaminopimelate. It functions in the pathway amino-acid biosynthesis; L-lysine biosynthesis via DAP pathway; DL-2,6-diaminopimelate from LL-2,6-diaminopimelate: step 1/1. Catalyzes the stereoinversion of LL-2,6-diaminopimelate (L,L-DAP) to meso-diaminopimelate (meso-DAP), a precursor of L-lysine and an essential component of the bacterial peptidoglycan. In Rickettsia akari (strain Hartford), this protein is Diaminopimelate epimerase.